The primary structure comprises 394 residues: Probable nucleoredoxin 2 (394 aa).

Thioredoxin domains lie at glycine 15–glutamate 176 and serine 180–aspartate 327.

Belongs to the nucleoredoxin family.

The catalysed reaction is [protein]-dithiol + NAD(+) = [protein]-disulfide + NADH + H(+). It catalyses the reaction [protein]-dithiol + NADP(+) = [protein]-disulfide + NADPH + H(+). Probable thiol-disulfide oxidoreductase that may participate in various redox reactions. This is Probable nucleoredoxin 2 from Oryza sativa subsp. japonica (Rice).